The sequence spans 591 residues: 5'-nucleotidase domain-containing protein DDB_G0275467 (591 aa).

Low complexity-rich tracts occupy residues 38–50 (STTT…SYST) and 68–78 (QHQQQQPQQHQ). The disordered stretch occupies residues 38–88 (STTTTSGIKSYSTHNRSNNDTHTSKSNTIDQHQQQQPQQHQNNDNKHLFTP). Asp165 serves as the catalytic Nucleophile. Residues Asp165 and Asp167 each contribute to the Mg(2+) site. Catalysis depends on Asp167, which acts as the Proton donor. 305–313 (TAAVGKVHL) contacts substrate. A Mg(2+)-binding site is contributed by Asp450.

It belongs to the 5'(3')-deoxyribonucleotidase family. The cofactor is Mg(2+).

This Dictyostelium discoideum (Social amoeba) protein is 5'-nucleotidase domain-containing protein DDB_G0275467.